We begin with the raw amino-acid sequence, 617 residues long: ATP-dependent rRNA helicase SPB4 (617 aa).

A Q motif motif is present at residues 10-38; sequence WKNLQYDLQPWIKEAIASLGFPTMTPVQA. Residues 41 to 233 form the Helicase ATP-binding domain; sequence IPLLSGNKDV…RAGMNNPVKV (193 aa). ATP is bound at residue 54 to 61; it reads AVTGSGKT. Residues 181-184 carry the DEAD box motif; the sequence is DEAD. The Helicase C-terminal domain maps to 261–421; it reads KITTLIKLLH…EMPTPDLNQS (161 aa). A coiled-coil region spans residues 515–585; that stretch reads ADNQQEASRL…EKQIMEESSD (71 aa). The segment at 547 to 617 is disordered; that stretch reads KNEAWSSKTE…GSMQGSFDDL (71 aa). The span at 555–566 shows a compositional bias: basic and acidic residues; the sequence is TETKETKQERRE. A compositionally biased stretch (polar residues) spans 608–617; sequence GSMQGSFDDL.

This sequence belongs to the DEAD box helicase family. DDX55/SPB4 subfamily. In terms of assembly, component of pre-60S ribosomal complexes.

Its subcellular location is the nucleus. The protein resides in the nucleolus. It carries out the reaction ATP + H2O = ADP + phosphate + H(+). ATP-binding RNA helicase involved in the biogenesis of 60S ribosomal subunits. Binds 90S pre-ribosomal particles and dissociates from pre-60S ribosomal particles after processing of 27SB pre-rRNA. Required for the normal formation of 18S rRNA through the processing of pre-rRNAs at sites A0, A1 and A2, and the normal formation of 25S and 5.8S rRNAs through the processing of pre-rRNAs at sites C1 and C2. The protein is ATP-dependent rRNA helicase SPB4 of Scheffersomyces stipitis (strain ATCC 58785 / CBS 6054 / NBRC 10063 / NRRL Y-11545) (Yeast).